Reading from the N-terminus, the 129-residue chain is Glycine cleavage system H protein (129 aa).

Residues 24–106 (HAVVGITDFA…YDGGWLFKLA (83 aa)) enclose the Lipoyl-binding domain. Lys-65 bears the N6-lipoyllysine mark.

Belongs to the GcvH family. The glycine cleavage system is composed of four proteins: P, T, L and H. (R)-lipoate serves as cofactor.

Functionally, the glycine cleavage system catalyzes the degradation of glycine. The H protein shuttles the methylamine group of glycine from the P protein to the T protein. This Hydrogenovibrio crunogenus (strain DSM 25203 / XCL-2) (Thiomicrospira crunogena) protein is Glycine cleavage system H protein.